A 174-amino-acid polypeptide reads, in one-letter code: NADH-quinone oxidoreductase subunit B (174 aa).

Residues C53, C54, C118, and C148 each coordinate [4Fe-4S] cluster.

This sequence belongs to the complex I 20 kDa subunit family. As to quaternary structure, NDH-1 is composed of 14 different subunits. Subunits NuoB, C, D, E, F, and G constitute the peripheral sector of the complex. [4Fe-4S] cluster serves as cofactor.

Its subcellular location is the cell inner membrane. It catalyses the reaction a quinone + NADH + 5 H(+)(in) = a quinol + NAD(+) + 4 H(+)(out). In terms of biological role, NDH-1 shuttles electrons from NADH, via FMN and iron-sulfur (Fe-S) centers, to quinones in the respiratory chain. Couples the redox reaction to proton translocation (for every two electrons transferred, four hydrogen ions are translocated across the cytoplasmic membrane), and thus conserves the redox energy in a proton gradient. The chain is NADH-quinone oxidoreductase subunit B from Ruegeria sp. (strain TM1040) (Silicibacter sp.).